We begin with the raw amino-acid sequence, 122 residues long: Small ribosomal subunit protein uS13 (122 aa).

The tract at residues 95-122 (GLPVRGQRTHTNARTRKGPAKPIAGKKK) is disordered.

This sequence belongs to the universal ribosomal protein uS13 family. In terms of assembly, part of the 30S ribosomal subunit. Forms a loose heterodimer with protein S19. Forms two bridges to the 50S subunit in the 70S ribosome.

Located at the top of the head of the 30S subunit, it contacts several helices of the 16S rRNA. In the 70S ribosome it contacts the 23S rRNA (bridge B1a) and protein L5 of the 50S subunit (bridge B1b), connecting the 2 subunits; these bridges are implicated in subunit movement. Contacts the tRNAs in the A and P-sites. This is Small ribosomal subunit protein uS13 from Xanthobacter autotrophicus (strain ATCC BAA-1158 / Py2).